A 904-amino-acid chain; its full sequence is Translation initiation factor IF-2 (904 aa).

The interval 239–316 is disordered; that stretch reads QAATQAKTSE…DDGQGSFQAP (78 aa). A compositionally biased stretch (basic and acidic residues) spans 248–278; the sequence is EGAEKGTLHKKPETPGKKGDKGGRAADDGKK. A tr-type G domain is found at 404–571; that stretch reads HRAPVVTVMG…QVLLQAEILE (168 aa). Positions 413 to 420 are G1; the sequence is GHVDHGKT. Position 413–420 (413–420) interacts with GTP; sequence GHVDHGKT. The segment at 438–442 is G2; the sequence is GITQH. Residues 459–462 are G3; the sequence is DTPG. GTP is bound by residues 459–463 and 513–516; these read DTPGH and NKID. The segment at 513–516 is G4; sequence NKID. Positions 549-551 are G5; the sequence is SAK.

This sequence belongs to the TRAFAC class translation factor GTPase superfamily. Classic translation factor GTPase family. IF-2 subfamily.

The protein resides in the cytoplasm. Its function is as follows. One of the essential components for the initiation of protein synthesis. Protects formylmethionyl-tRNA from spontaneous hydrolysis and promotes its binding to the 30S ribosomal subunits. Also involved in the hydrolysis of GTP during the formation of the 70S ribosomal complex. The polypeptide is Translation initiation factor IF-2 (Dechloromonas aromatica (strain RCB)).